The chain runs to 608 residues: Glutamine--fructose-6-phosphate aminotransferase [isomerizing] (608 aa).

Cysteine 2 functions as the Nucleophile; for GATase activity in the catalytic mechanism. Residues 2–217 (CGIVGIVGTQ…DGDCAIVTRD (216 aa)) enclose the Glutamine amidotransferase type-2 domain. SIS domains are found at residues 281-422 (ADKA…ARGT) and 456-598 (LSRD…VDQP). The active-site For Fru-6P isomerization activity is lysine 603.

As to quaternary structure, homodimer.

It localises to the cytoplasm. It catalyses the reaction D-fructose 6-phosphate + L-glutamine = D-glucosamine 6-phosphate + L-glutamate. In terms of biological role, catalyzes the first step in hexosamine metabolism, converting fructose-6P into glucosamine-6P using glutamine as a nitrogen source. In Agrobacterium fabrum (strain C58 / ATCC 33970) (Agrobacterium tumefaciens (strain C58)), this protein is Glutamine--fructose-6-phosphate aminotransferase [isomerizing].